A 294-amino-acid polypeptide reads, in one-letter code: Protein RarD (294 aa).

The Cytoplasmic segment spans residues Met-1–Leu-11. The helical transmembrane segment at Leu-12 to Pro-34 threads the bilayer. Residues Phe-18–Trp-145 enclose the EamA domain. At Ala-35 to Glu-37 the chain is on the periplasmic side. The chain crosses the membrane as a helical span at residues Ile-38–Trp-60. Over Arg-61 to Lys-72 the chain is Cytoplasmic. The chain crosses the membrane as a helical span at residues Ile-73–Asn-95. At Asn-96–Met-99 the chain is on the periplasmic side. A helical transmembrane segment spans residues Leu-100–Gly-122. Topologically, residues Glu-123–Met-128 are cytoplasmic. The helical transmembrane segment at Gln-129–Thr-146 threads the bilayer. Topologically, residues Phe-147 to Ser-149 are periplasmic. The helical transmembrane segment at Leu-150–Val-167 threads the bilayer. Residues Arg-168–Met-179 are Cytoplasmic-facing. Residues Leu-180–Ile-197 form a helical membrane-spanning segment. At Ala-198 to Ser-211 the chain is on the periplasmic side. A helical membrane pass occupies residues Leu-212–Ala-234. Over Thr-235–Arg-238 the chain is Cytoplasmic. A helical transmembrane segment spans residues Leu-239 to Tyr-261. The Periplasmic segment spans residues Gly-262–Met-270. A helical transmembrane segment spans residues Val-271–Thr-290. Residues Gln-291–Lys-294 are Cytoplasmic-facing.

It belongs to the EamA transporter family.

Its subcellular location is the cell inner membrane. This chain is Protein RarD (rarD), found in Salmonella typhimurium (strain LT2 / SGSC1412 / ATCC 700720).